We begin with the raw amino-acid sequence, 582 residues long: Cryptochrome-2 (582 aa).

The Photolyase/cryptochrome alpha/beta domain occupies 12–141 (CRSVHWFRRG…EVVIENSHTL (130 aa)). FAD contacts are provided by residues Ser-261, Gln-298, His-364, and 396–398 (DAD). The segment at 521–559 (GPVTDSAPGQGSSTSTAVRLPQSDQASPKRKHEGAEELC) is disordered. Polar residues predominate over residues 527 to 546 (APGQGSSTSTAVRLPQSDQA).

Belongs to the DNA photolyase class-1 family. As to quaternary structure, component of the circadian core oscillator, which includes the CRY proteins, CLOCK or NPAS2, BMAL1 or BMAL2, CSNK1E, and the PER proteins. The cofactor is FAD. It depends on (6R)-5,10-methylene-5,6,7,8-tetrahydrofolate as a cofactor. In terms of tissue distribution, expressed in the pineal gland.

The protein resides in the cytoplasm. Its subcellular location is the nucleus. Transcriptional repressor which forms a core component of the circadian clock. The circadian clock, an internal time-keeping system, regulates various physiological processes through the generation of approximately 24 hour circadian rhythms in gene expression, which are translated into rhythms in metabolism and behavior. It is derived from the Latin roots 'circa' (about) and 'diem' (day) and acts as an important regulator of a wide array of physiological functions including metabolism, sleep, body temperature, blood pressure, endocrine, immune, cardiovascular, and renal function. Consists of two major components: the central clock, residing in the suprachiasmatic nucleus (SCN) of the brain, and the peripheral clocks that are present in nearly every tissue and organ system. Both the central and peripheral clocks can be reset by environmental cues, also known as Zeitgebers (German for 'timegivers'). The predominant Zeitgeber for the central clock is light, which is sensed by retina and signals directly to the SCN. The central clock entrains the peripheral clocks through neuronal and hormonal signals, body temperature and feeding-related cues, aligning all clocks with the external light/dark cycle. Circadian rhythms allow an organism to achieve temporal homeostasis with its environment at the molecular level by regulating gene expression to create a peak of protein expression once every 24 hours to control when a particular physiological process is most active with respect to the solar day. Transcription and translation of core clock components (CLOCK, NPAS2, BMAL1, BMAL2, PER1, PER2, PER3, CRY1 and CRY2) plays a critical role in rhythm generation, whereas delays imposed by post-translational modifications (PTMs) are important for determining the period (tau) of the rhythms (tau refers to the period of a rhythm and is the length, in time, of one complete cycle). A diurnal rhythm is synchronized with the day/night cycle, while the ultradian and infradian rhythms have a period shorter and longer than 24 hours, respectively. Disruptions in the circadian rhythms contribute to the pathology of cardiovascular diseases, cancer, metabolic syndromes and aging. A transcription/translation feedback loop (TTFL) forms the core of the molecular circadian clock mechanism. Transcription factors, CLOCK or NPAS2 and BMAL1 or BMAL2, form the positive limb of the feedback loop, act in the form of a heterodimer and activate the transcription of core clock genes and clock-controlled genes (involved in key metabolic processes), harboring E-box elements (5'-CACGTG-3') within their promoters. The core clock genes: PER1/2/3 and CRY1/2 which are transcriptional repressors form the negative limb of the feedback loop and interact with the CLOCK|NPAS2-BMAL1|BMAL2 heterodimer inhibiting its activity and thereby negatively regulating their own expression. This heterodimer also activates nuclear receptors NR1D1/2, RORA/B/G, which form a second feedback loop and which activate and repress BMAL1 transcription, respectively. CRY1 and CRY2 have redundant functions but also differential and selective contributions at least in defining the pace of the SCN circadian clock and its circadian transcriptional outputs. Less potent transcriptional repressor in cerebellum and liver than CRY1, though less effective in lengthening the period of the SCN oscillator. Seems to play a critical role in tuning SCN circadian period by opposing the action of CRY1. With CRY1, dispensable for circadian rhythm generation but necessary for the development of intercellular networks for rhythm synchrony. Represses CLOCK-BMAL1-mediated transcriptional activation. This Gallus gallus (Chicken) protein is Cryptochrome-2 (CRY2).